Here is a 1007-residue protein sequence, read N- to C-terminus: Glucose transport transcription regulator RGT1 (1007 aa).

Polar residues predominate over residues 1–11 (MLSALIQNGMS). Residues 1 to 115 (MLSALIQNGM…ESRRRSKVSR (115 aa)) are disordered. A compositionally biased stretch (low complexity) spans 21 to 33 (NNTTNGSSSTTDN). 3 stretches are compositionally biased toward polar residues: residues 42–65 (NTEN…SKQD), 74–83 (TPRSINTGAS), and 96–105 (VSSNVSTATT). Positions 117 to 151 (CDQCRKKKIKCDFIEGHDINPDQSCTGCRKIGEKC) form a DNA-binding region, zn(2)-C6 fungal-type. Disordered stretches follow at residues 155 to 224 (RIPL…ATST), 267 to 350 (QRRP…SAIP), 399 to 423 (LQQQ…SNGG), and 462 to 496 (AEVE…QNLP). Polar residues-rich tracts occupy residues 196–206 (SVSNPVNAVNE) and 274–288 (SLAS…GKTN). Positions 289 to 303 (QQQPLPSQSQPQSLQ) are enriched in low complexity. 3 stretches are compositionally biased toward polar residues: residues 304-323 (NIGN…TFRN), 329-339 (QPSQDSVSEAG), and 404-419 (SLHS…STGI). Positions 473-489 (QKKRKRSNRSSTSKKGK) are enriched in basic residues.

It belongs to the EDS1/RGT1 family.

It localises to the nucleus. The protein localises to the cytoplasm. Its function is as follows. Glucose-responsive transcription factor that regulates expression of several glucose transporter (HXT) genes in response to glucose. In the absence of glucose, it functions as a transcriptional repressor, whereas high concentrations of glucose cause it to function as a transcriptional activator. In cells growing on low levels of glucose, has a neutral role, neither repressing nor activating transcription. This is Glucose transport transcription regulator RGT1 (RGT1) from Kluyveromyces lactis (strain ATCC 8585 / CBS 2359 / DSM 70799 / NBRC 1267 / NRRL Y-1140 / WM37) (Yeast).